Consider the following 113-residue polypeptide: Putative pterin-4-alpha-carbinolamine dehydratase (113 aa).

Belongs to the pterin-4-alpha-carbinolamine dehydratase family.

It carries out the reaction (4aS,6R)-4a-hydroxy-L-erythro-5,6,7,8-tetrahydrobiopterin = (6R)-L-erythro-6,7-dihydrobiopterin + H2O. This Nitrosomonas europaea (strain ATCC 19718 / CIP 103999 / KCTC 2705 / NBRC 14298) protein is Putative pterin-4-alpha-carbinolamine dehydratase.